We begin with the raw amino-acid sequence, 312 residues long: Olfactory receptor 1500 (312 aa).

The Extracellular segment spans residues 1–25 (MTGNNQTLILEFLLLGLPIPSEYHL). An N-linked (GlcNAc...) asparagine glycan is attached at N5. Residues 26–49 (LFYALFLAMYLTIILGNLLIIVLV) form a helical membrane-spanning segment. The Cytoplasmic segment spans residues 50–57 (RLDSHLHM). The chain crosses the membrane as a helical span at residues 58–79 (PMYLFLSNLSFSDLCFSSVTMP). Topologically, residues 80–100 (KLLQNMQSQVPSISYTGCLTQ) are extracellular. A disulfide bridge connects residues C97 and C189. The chain crosses the membrane as a helical span at residues 101-120 (LYFFMVFGDMESFLLVVMAY). The Cytoplasmic segment spans residues 121-139 (DRYVAICFPLRYTTIMSTK). The chain crosses the membrane as a helical span at residues 140-158 (FCASLVLLLWMLTMTHALL). Residues 159-196 (HTLLIARLSFCEKNVILHFFCDISALLKLSCSDIYVNE) lie on the Extracellular side of the membrane. The helical transmembrane segment at 197-219 (LMIYILGGLIIIIPFLLIVMSYV) threads the bilayer. Residues 220-236 (RIFFSILKFPSIQDIYK) are Cytoplasmic-facing. The helical transmembrane segment at 237–260 (VFSTCGSHLSVVTLFYGTIFGIYL) threads the bilayer. The Extracellular segment spans residues 261 to 272 (CPSGNNSTVKEI). Residues 273–292 (AMAMMYTVVTPMLNPFIYSL) form a helical membrane-spanning segment. Topologically, residues 293–312 (RNRDMKRALIRVICTKKISL) are cytoplasmic.

This sequence belongs to the G-protein coupled receptor 1 family. In terms of tissue distribution, olfactory epithelium.

The protein resides in the cell membrane. In terms of biological role, odorant receptor. The chain is Olfactory receptor 1500 (Olr1500) from Rattus norvegicus (Rat).